The following is a 147-amino-acid chain: MEIILKEDVVNLGYKNDIVTVKSGYGRNYLIPTGKAVIASPSAKKMLAEELKQRAHKLEKIKKDAEAMAEQLKDVTLTIATKVSATGTIFGSVSNIQIAEELEKLGHKVDRKIIVVKDAVKEVGSYKAIVKLHKEVSVEIPFEVVAE.

It belongs to the bacterial ribosomal protein bL9 family.

Binds to the 23S rRNA. This chain is Large ribosomal subunit protein bL9, found in Phocaeicola vulgatus (strain ATCC 8482 / DSM 1447 / JCM 5826 / CCUG 4940 / NBRC 14291 / NCTC 11154) (Bacteroides vulgatus).